The chain runs to 75 residues: MARFYRRRKFCRFTAEGITHIDYKDVELLKQYISDNGKIVPSRITGTSNKYQRQLATAIKQARYLALLPYTDNHQ.

Belongs to the bacterial ribosomal protein bS18 family. Part of the 30S ribosomal subunit. Forms a tight heterodimer with protein bS6.

Binds as a heterodimer with protein bS6 to the central domain of the 16S rRNA, where it helps stabilize the platform of the 30S subunit. This chain is Small ribosomal subunit protein bS18, found in Psychrobacter sp. (strain PRwf-1).